The primary structure comprises 960 residues: Probable RNA-binding protein 19 (960 aa).

Residues 2–79 form the RRM 1 domain; the sequence is SRLIVKNLPN…SRITVEFCKS (78 aa). Disordered stretches follow at residues 85 to 119 and 149 to 294; these read KPRA…KKKK and WAND…TTCH. A phosphoserine mark is found at S174, S176, and S180. Acidic residues predominate over residues 176-194; it reads SGQESEEEGAGEDLEEEAS. The span at 273-286 shows a compositional bias: basic and acidic residues; that stretch reads RPPEARAETEKPAN. 2 RRM domains span residues 294–369 and 402–480; these read HTVK…REKN and GRLF…PSTI. A Glycyl lysine isopeptide (Lys-Gly) (interchain with G-Cter in SUMO2) cross-link involves residue K481. A disordered region spans residues 491 to 513; that stretch reads LGSSSYKKKKEAQDKANSASSHN. An RRM 4 domain is found at 587–659; that stretch reads TVILVKNLPA…VPLYLEWAPV (73 aa). A disordered region spans residues 667–729; it reads PQKKKLQDTP…EEEEEESLPG (63 aa). Acidic residues-rich tracts occupy residues 689–706 and 714–726; these read TVPD…EEGA and EEEE…EEES. RRM domains lie at 730–811 and 832–912; these read CTLF…ISER and SKIL…WADS. S936, S949, and S951 each carry phosphoserine.

It belongs to the RRM MRD1 family. As to expression, expressed in the crypts of Lieberkuhn of the intestine and in intestinal neoplasia (at protein level).

Its subcellular location is the nucleus. The protein resides in the nucleolus. It is found in the nucleoplasm. It localises to the cytoplasm. The protein localises to the chromosome. In terms of biological role, plays a role in embryo pre-implantation development. This is Probable RNA-binding protein 19 (RBM19) from Homo sapiens (Human).